Reading from the N-terminus, the 810-residue chain is Ecotropic viral integration site 5 protein homolog (810 aa).

The tract at residues 1 to 483 (MVTNKMTAAF…EAESQCALKE (483 aa)) is interaction with alpha-tubulin, gamma-tubulin, BIRC5 and FBXO5. Disordered stretches follow at residues 49–80 (VASP…QLSP) and 98–123 (TDSK…SSSA). Positions 51–80 (SPSTSLHTTSSSTTLSTPALSPSSPSQLSP) are enriched in low complexity. Phosphoserine occurs at positions 102 and 113. The span at 103 to 123 (LRSVNGSRRNSGSSLVSSSSA) shows a compositional bias: low complexity. The segment at 128–693 (SHLEEDSWIL…LNKSDSNQYI (566 aa)) is dimerization. The Rab-GAP TBC domain occupies 163 to 348 (GIPHHFRAIV…RIFDIFMSEG (186 aa)). Residues 377–810 (QHFQKVIPHQ…RRRESYSTTV (434 aa)) form a targeting to the centrosomes region. A coiled-coil region spans residues 406-716 (KKMKKLEKEY…LRCLKGQRGF (311 aa)). Residues 487-810 (KVLDIEKRNN…RRRESYSTTV (324 aa)) are interaction with AURKB and INCENP. Phosphoserine is present on residues Ser497, Ser689, Ser776, and Ser778. The disordered stretch occupies residues 756 to 810 (GFPLHGKSGSMSLDPAVADGSESETEDSVLETRESNQVVQKERPPRRRESYSTTV). Basic and acidic residues predominate over residues 785–810 (LETRESNQVVQKERPPRRRESYSTTV).

In terms of assembly, dimeric and monomeric. Interacts with alpha- and gamma-tubulin. Interacts with FBXO5. Interacts with the chromosome passenger complex (CPC) which is at least composed of AURKB/aurora-B, BIRC5/survivin, CDCA8/borealin and INCENP. In terms of processing, probably phosphorylated by PLK1; may be required for degradation during mitosis. Post-translationally, ubiquitinated. Degradation during prophase is ubiquitin-dependent. Expressed in various cell lines (at protein level). Expressed in a wide range of tissues including brain and adrenal.

It is found in the nucleus. It localises to the cytoplasm. Its subcellular location is the cytoskeleton. The protein localises to the microtubule organizing center. The protein resides in the centrosome. It is found in the spindle. Functionally, functions as a regulator of cell cycle progression by stabilizing the FBXO5 protein and promoting cyclin-A accumulation during interphase. May play a role in cytokinesis. This Homo sapiens (Human) protein is Ecotropic viral integration site 5 protein homolog (EVI5).